The following is a 357-amino-acid chain: Peptide chain release factor 1 (357 aa).

Gln236 carries the N5-methylglutamine modification.

This sequence belongs to the prokaryotic/mitochondrial release factor family. Methylated by PrmC. Methylation increases the termination efficiency of RF1.

Its subcellular location is the cytoplasm. In terms of biological role, peptide chain release factor 1 directs the termination of translation in response to the peptide chain termination codons UAG and UAA. This chain is Peptide chain release factor 1, found in Mycolicibacterium paratuberculosis (strain ATCC BAA-968 / K-10) (Mycobacterium paratuberculosis).